The sequence spans 131 residues: Cilia- and flagella-associated protein 144 (131 aa).

The interval 79–99 is disordered; sequence TKKYSEPQTESQEIGWNTTPL. Positions 84 to 99 are enriched in polar residues; the sequence is EPQTESQEIGWNTTPL.

It belongs to the CFAP144 family. In terms of tissue distribution, expressed in choroid plexus (at protein level). Expressed by motile ciliated cells in choroid plexus.

The protein resides in the cytoplasm. It localises to the cytoskeleton. The protein localises to the cilium axoneme. It is found in the flagellum axoneme. In terms of biological role, microtubule inner protein (MIP) part of the dynein-decorated doublet microtubules (DMTs) in cilia axoneme, which is required for motile cilia beating. The polypeptide is Cilia- and flagella-associated protein 144 (CFAP144) (Gallus gallus (Chicken)).